A 30-amino-acid polypeptide reads, in one-letter code: Cyclotide hyen-H (30 aa).

Positions 1-30 (KIPCGESCVYIPCISSVLGCSCSNKVCYKD) form a cross-link, cyclopeptide (Lys-Asp). Cystine bridges form between Cys-4-Cys-20, Cys-8-Cys-22, and Cys-13-Cys-27.

This is a cyclic peptide. Detected in stems (at protein level).

In terms of biological role, probably participates in a plant defense mechanism. This is Cyclotide hyen-H from Pigea enneasperma (Spade flower).